The following is a 202-amino-acid chain: Imidazoleglycerol-phosphate dehydratase (202 aa).

It belongs to the imidazoleglycerol-phosphate dehydratase family.

Its subcellular location is the cytoplasm. It catalyses the reaction D-erythro-1-(imidazol-4-yl)glycerol 3-phosphate = 3-(imidazol-4-yl)-2-oxopropyl phosphate + H2O. The protein operates within amino-acid biosynthesis; L-histidine biosynthesis; L-histidine from 5-phospho-alpha-D-ribose 1-diphosphate: step 6/9. In Salinibacter ruber (strain DSM 13855 / M31), this protein is Imidazoleglycerol-phosphate dehydratase.